A 170-amino-acid chain; its full sequence is Putative beta-eliminating lyase-like protein (170 aa).

At Lys-32 the chain carries N6-(pyridoxal phosphate)lysine.

Belongs to the beta-eliminating lyase family. The cofactor is pyridoxal 5'-phosphate.

This chain is Putative beta-eliminating lyase-like protein, found in Dictyostelium discoideum (Social amoeba).